The following is a 425-amino-acid chain: Sensor histidine kinase NarS (425 aa).

The next 6 helical transmembrane spans lie at 42–62 (IASVLRIGVVGLMVAAMVVGT), 71–91 (IVLIGVYAVAALWALLLAYSA), 107–127 (LEPFAFTAVDVLILTGFQLLS), 130–150 (GIYPLLIMILLPVLVGLDVST), 155–175 (VVLACTLVGFAVAVLGDPVML), and 181–201 (PETIFRFALYAFLCATALMVV). A Histidine kinase domain is found at 224 to 425 (QTMTASEVLQ…HVCVELPLKR (202 aa)). The residue at position 241 (His-241) is a Phosphohistidine; by autocatalysis.

Post-translationally, autophosphorylated on His-241.

It is found in the cell membrane. It catalyses the reaction ATP + protein L-histidine = ADP + protein N-phospho-L-histidine.. Functionally, member of the two-component regulatory system NarS/NarL involved in gene expression during aerobic nitrate metabolism. Plays therefore a crucial role in anaerobic survival of mycobacteria in host. Functions as a sensor protein kinase which is autophosphorylated at a histidine residue and transfers its phosphate group to the conserved aspartic acid residue in the regulatory domain of NarL. In turn, NarL binds to the upstream promoter regions of target genes to regulate their expression during aerobic nitrate metabolism. This chain is Sensor histidine kinase NarS, found in Mycobacterium tuberculosis (strain ATCC 25618 / H37Rv).